The sequence spans 167 residues: Transmembrane protein B169L (167 aa).

The next 2 membrane-spanning stretches (helical) occupy residues asparagine 28 to cysteine 48 and threonine 60 to asparagine 80. The N-linked (GlcNAc...) asparagine; by host glycan is linked to asparagine 88.

This sequence belongs to the asfivirus B169L family.

The protein localises to the host membrane. It localises to the virion. This African swine fever virus (isolate Tick/Malawi/Lil 20-1/1983) (ASFV) protein is Transmembrane protein B169L.